The following is a 60-amino-acid chain: UPF0434 protein HCH_02705 (60 aa).

It belongs to the UPF0434 family.

The sequence is that of UPF0434 protein HCH_02705 from Hahella chejuensis (strain KCTC 2396).